Consider the following 529-residue polypeptide: Peptide chain release factor 3 (529 aa).

One can recognise a tr-type G domain in the interval 7-275; sequence EQRRTFGIIS…AVVELAPSPR (269 aa). Residues 16-23, 84-88, and 138-141 contribute to the GTP site; these read SHPDAGKT, DTPGH, and NKLD.

This sequence belongs to the TRAFAC class translation factor GTPase superfamily. Classic translation factor GTPase family. PrfC subfamily.

It is found in the cytoplasm. Functionally, increases the formation of ribosomal termination complexes and stimulates activities of RF-1 and RF-2. It binds guanine nucleotides and has strong preference for UGA stop codons. It may interact directly with the ribosome. The stimulation of RF-1 and RF-2 is significantly reduced by GTP and GDP, but not by GMP. The polypeptide is Peptide chain release factor 3 (Syntrophus aciditrophicus (strain SB)).